A 434-amino-acid chain; its full sequence is MKNWRTLILGLVICANTAFAAPQEVDKVAAVVDNGVVLQSDIDGLLQSVKMNAQQSGQQVPDDSTLRHQILERLIMDNIQLQMAKKMGITITDQALDKAIADIAAQNRMTLAQMRSRLAADGLSYDTYREQIRKEMLTSEVRNNEVRRRITILPQEVESLAKQMGNQVSGDTELNLSHILIPLPENPTQQQVDQAEDLANKLVADIKGGADFGKLAIANSADSQALKGGQMGWGKLQELPSLFAERLQSAHKGEIVGPIRSGVGFHILKVNDMRGADQTISVTEVNARHILLKPSPMMTDEQARAKLEAAAAEIKSGKTSFATIAKEISQDPGSAMQGGELGWASPDIYDPAFRDALMKLKKGEISAPVHSSFGWHLIQLVDTRQVDKTDAAQKERAYRMLFNRKFAEEAQTWMQEQRAAAYVKILDGSNAQPQ.

Residues 1-20 form the signal peptide; the sequence is MKNWRTLILGLVICANTAFA. PpiC domains are found at residues 171-272 and 282-382; these read DTEL…KVND and VTEV…QLVD.

The protein localises to the periplasm. The enzyme catalyses [protein]-peptidylproline (omega=180) = [protein]-peptidylproline (omega=0). Its function is as follows. Chaperone involved in the correct folding and assembly of outer membrane proteins. Recognizes specific patterns of aromatic residues and the orientation of their side chains, which are found more frequently in integral outer membrane proteins. May act in both early periplasmic and late outer membrane-associated steps of protein maturation. The polypeptide is Chaperone SurA (Yersinia pestis bv. Antiqua (strain Nepal516)).